We begin with the raw amino-acid sequence, 321 residues long: tRNA-5-methyluridine(54) 2-sulfurtransferase (321 aa).

The Zn(2+) site is built by Cys-3, Cys-6, Cys-22, and His-25. ATP is bound by residues 53–55, Asp-59, and Ile-79; that span reads AVS. 2 residues coordinate [4Fe-4S] cluster: Cys-130 and Cys-133. A Glycyl lysine isopeptide (Lys-Gly) (interchain with G-Cter in TtuB) cross-link involves residue Lys-137. Gly-156 and Asp-161 together coordinate ATP. Cys-222 serves as a coordination point for [4Fe-4S] cluster. Residues Lys-226 and Lys-229 each participate in a glycyl lysine isopeptide (Lys-Gly) (interchain with G-Cter in TtuB) cross-link. 4 residues coordinate Zn(2+): Cys-274, Cys-277, Cys-286, and Cys-289.

This sequence belongs to the TtcA family. TtuA subfamily. Homodimer. Is able to form a heterocomplex with TtuB. The cofactor is [4Fe-4S] cluster. Mg(2+) is required as a cofactor. Conjugated to TtuB via covalent linkages involving Lys-137, Lys-226 and Lys-229.

It carries out the reaction [TtuB sulfur-carrier protein]-C-terminal-Gly-aminoethanethioate + 5-methyluridine(54) in tRNA + ATP + H2O = [TtuB sulfur-carrier protein]-C-terminal Gly-Gly + 5-methyl-2-thiouridine(54) in tRNA + AMP + diphosphate + H(+). Its pathway is tRNA modification. Enzymatic activity may be regulated by TtuB conjugation. Catalyzes the ATP-dependent 2-thiolation of 5-methyluridine residue at position 54 in the T loop of tRNAs, leading to 5-methyl-2-thiouridine (m(5)s(2)U or s(2)T). This modification allows thermal stabilization of tRNAs in thermophilic microorganisms, and is required for cell growth at high temperatures. TtuA transfers the S atom from the thiocarboxylated C-terminus of TtuB to tRNA. The sequence is that of tRNA-5-methyluridine(54) 2-sulfurtransferase from Thermus thermophilus (strain ATCC BAA-163 / DSM 7039 / HB27).